The chain runs to 526 residues: Butyrophilin subfamily 1 member A1 (526 aa).

The signal sequence occupies residues 1 to 26 (MAVFPSSGLPRCLLTLILLQLPKLDS). Ig-like V-type domains are found at residues 27–138 (APFD…ALVH) and 148–234 (PHIS…VEIS). The Extracellular portion of the chain corresponds to 27-242 (APFDVIGPPE…ISIPASSLPR (216 aa)). 2 disulfide bridges follow: cysteine 50–cysteine 124 and cysteine 164–cysteine 218. N-linked (GlcNAc...) asparagine glycosylation is found at asparagine 55 and asparagine 215. A helical membrane pass occupies residues 243–269 (LTPWIVAVAVILMVLGLLTIGSIFFTW). At 270-526 (RLYNERPRER…IPTQPSQGAP (257 aa)) the chain is on the cytoplasmic side. The B30.2/SPRY domain occupies 285–479 (SKERLLEELK…LTICPIADGP (195 aa)). Residues 495 to 526 (IPLSPMGEDSAPRDADTLHSKLIPTQPSQGAP) form a disordered region. Over residues 504-513 (SAPRDADTLH) the composition is skewed to basic and acidic residues. A compositionally biased stretch (polar residues) spans 517-526 (IPTQPSQGAP).

It belongs to the immunoglobulin superfamily. BTN/MOG family. As to quaternary structure, seems to associate with xanthine dehydrogenase/oxidase. Post-translationally, N-glycosylated.

The protein resides in the membrane. Its subcellular location is the secreted. Its function is as follows. May function in the secretion of milk-fat droplets. May act as a specific membrane-associated receptor for the association of cytoplasmic droplets with the apical plasma membrane. Inhibits the proliferation of CD4 and CD8 T-cells activated by anti-CD3 antibodies, T-cell metabolism and IL2 and IFNG secretion. The chain is Butyrophilin subfamily 1 member A1 (BTN1A1) from Homo sapiens (Human).